The primary structure comprises 179 residues: Protein GrpE (179 aa).

A disordered region spans residues 1–20 (MSEETKEEIKNEKVDEEVTE).

Belongs to the GrpE family. Homodimer.

It is found in the cytoplasm. In terms of biological role, participates actively in the response to hyperosmotic and heat shock by preventing the aggregation of stress-denatured proteins, in association with DnaK and GrpE. It is the nucleotide exchange factor for DnaK and may function as a thermosensor. Unfolded proteins bind initially to DnaJ; upon interaction with the DnaJ-bound protein, DnaK hydrolyzes its bound ATP, resulting in the formation of a stable complex. GrpE releases ADP from DnaK; ATP binding to DnaK triggers the release of the substrate protein, thus completing the reaction cycle. Several rounds of ATP-dependent interactions between DnaJ, DnaK and GrpE are required for fully efficient folding. The sequence is that of Protein GrpE from Lactococcus lactis subsp. cremoris (strain MG1363).